A 160-amino-acid chain; its full sequence is Cyclic pyranopterin monophosphate synthase (160 aa).

Residues leucine 74–histidine 76 and methionine 112–glutamate 113 each bind substrate. Aspartate 127 is a catalytic residue.

The protein belongs to the MoaC family. As to quaternary structure, homohexamer; trimer of dimers.

The enzyme catalyses (8S)-3',8-cyclo-7,8-dihydroguanosine 5'-triphosphate = cyclic pyranopterin phosphate + diphosphate. It functions in the pathway cofactor biosynthesis; molybdopterin biosynthesis. Functionally, catalyzes the conversion of (8S)-3',8-cyclo-7,8-dihydroguanosine 5'-triphosphate to cyclic pyranopterin monophosphate (cPMP). This is Cyclic pyranopterin monophosphate synthase from Trichlorobacter lovleyi (strain ATCC BAA-1151 / DSM 17278 / SZ) (Geobacter lovleyi).